A 512-amino-acid polypeptide reads, in one-letter code: Glutathione-binding protein GsiB (512 aa).

Residues M1–A26 form the signal peptide.

Belongs to the bacterial solute-binding protein 5 family. As to quaternary structure, the complex is composed of two ATP-binding proteins (GsiA), two transmembrane proteins (GsiC and GsiD) and a solute-binding protein (GsiB).

The protein resides in the periplasm. Its function is as follows. Part of the ABC transporter complex GsiABCD involved in glutathione import. Binds glutathione. In Shigella dysenteriae serotype 1 (strain Sd197), this protein is Glutathione-binding protein GsiB.